Consider the following 29-residue polypeptide: Cyclotide mden-A (29 aa).

A cross-link (cyclopeptide (Gly-Asn)) is located at residues Gly1–Asn29. 3 disulfide bridges follow: Cys5–Cys19, Cys9–Cys21, and Cys14–Cys26.

It belongs to the cyclotide family. Moebius subfamily. Post-translationally, this is a cyclic peptide.

Functionally, probably participates in a plant defense mechanism. The polypeptide is Cyclotide mden-A (Melicytus dentatus (Tree violet)).